The sequence spans 444 residues: Methylenetetrahydrofolate--tRNA-(uracil-5-)-methyltransferase TrmFO (444 aa).

G10–G15 contacts FAD.

Belongs to the MnmG family. TrmFO subfamily. It depends on FAD as a cofactor.

It is found in the cytoplasm. The catalysed reaction is uridine(54) in tRNA + (6R)-5,10-methylene-5,6,7,8-tetrahydrofolate + NADH + H(+) = 5-methyluridine(54) in tRNA + (6S)-5,6,7,8-tetrahydrofolate + NAD(+). The enzyme catalyses uridine(54) in tRNA + (6R)-5,10-methylene-5,6,7,8-tetrahydrofolate + NADPH + H(+) = 5-methyluridine(54) in tRNA + (6S)-5,6,7,8-tetrahydrofolate + NADP(+). Its function is as follows. Catalyzes the folate-dependent formation of 5-methyl-uridine at position 54 (M-5-U54) in all tRNAs. The polypeptide is Methylenetetrahydrofolate--tRNA-(uracil-5-)-methyltransferase TrmFO (Streptococcus sanguinis (strain SK36)).